Reading from the N-terminus, the 49-residue chain is Large ribosomal subunit protein bL33 (49 aa).

Belongs to the bacterial ribosomal protein bL33 family.

This Heliobacterium modesticaldum (strain ATCC 51547 / Ice1) protein is Large ribosomal subunit protein bL33.